The chain runs to 113 residues: Large ribosomal subunit protein uL22 (113 aa).

Belongs to the universal ribosomal protein uL22 family. Part of the 50S ribosomal subunit.

Its function is as follows. This protein binds specifically to 23S rRNA; its binding is stimulated by other ribosomal proteins, e.g. L4, L17, and L20. It is important during the early stages of 50S assembly. It makes multiple contacts with different domains of the 23S rRNA in the assembled 50S subunit and ribosome. Functionally, the globular domain of the protein is located near the polypeptide exit tunnel on the outside of the subunit, while an extended beta-hairpin is found that lines the wall of the exit tunnel in the center of the 70S ribosome. The polypeptide is Large ribosomal subunit protein uL22 (Bacillus cytotoxicus (strain DSM 22905 / CIP 110041 / 391-98 / NVH 391-98)).